The sequence spans 778 residues: Transcription factor kayak (778 aa).

2 stretches are compositionally biased toward low complexity: residues 24 to 54 (AQQL…HTQQ) and 77 to 98 (QYYQ…QRQL). 6 disordered regions span residues 24-57 (AQQL…QNGL), 76-130 (NQYY…HQLR), 183-223 (QPTA…TTNG), 294-320 (APLV…VLAS), 356-414 (ASVM…GTGG), and 427-478 (RNTN…RKRR). Polar residues predominate over residues 99-108 (PTQQPAASYE). Composition is skewed to low complexity over residues 109–130 (QQQQ…HQLR) and 183–222 (QPTA…TTTN). Over residues 382–402 (ISDTSSGATDSTSYQNGHMMG) the composition is skewed to low complexity. Positions 403-414 (NSGGGNGGGTGG) are enriched in gly residues. A compositionally biased stretch (polar residues) spans 427 to 436 (RNTNTSNSAT). The 64-residue stretch at 457–520 (EEKRRIRRER…NQLEYFLQAH (64 aa)) folds into the bZIP domain. A basic motif region spans residues 459-478 (KRRIRRERNKQAAARCRKRR). The leucine-zipper stretch occupies residues 485–513 (LTEEVELLEKRGENLKKEMELLNETKNQL). A compositionally biased stretch (low complexity) spans 550–571 (GSCGSGSSHHNNNSNSNDSSSG). 2 disordered regions span residues 550 to 594 (GSCG…DLKP) and 756 to 778 (TSQN…LVSL). The span at 579–589 (TLNSTGRSNSP) shows a compositional bias: polar residues. S588 carries the post-translational modification Phosphoserine.

The protein belongs to the bZIP family. Fos subfamily. Homodimer. Heterodimer with Jra. The kay-Jra heterodimer binds more stably to the AP-1 site than either of the two proteins alone.

It localises to the nucleus. Its function is as follows. Developmentally regulated transcription factor AP-1 binds and recognizes the enhancer DNA sequence: 5'-TGA[CG]TCA-3'. May play a role in the function or determination of a particular subset of cells in the developing embryo. It is able to carry out its function either independently of or in conjunction with Jra. This is Transcription factor kayak from Drosophila pseudoobscura pseudoobscura (Fruit fly).